A 296-amino-acid polypeptide reads, in one-letter code: Nucleotide-binding protein SAG0531 (296 aa).

13 to 20 is an ATP binding site; sequence GMSGAGKT. A GTP-binding site is contributed by 63–66; the sequence is DMRS.

It belongs to the RapZ-like family.

Its function is as follows. Displays ATPase and GTPase activities. This is Nucleotide-binding protein SAG0531 from Streptococcus agalactiae serotype V (strain ATCC BAA-611 / 2603 V/R).